Reading from the N-terminus, the 120-residue chain is Large ribosomal subunit protein uL18 (120 aa).

Belongs to the universal ribosomal protein uL18 family. As to quaternary structure, part of the 50S ribosomal subunit; part of the 5S rRNA/L5/L18/L25 subcomplex. Contacts the 5S and 23S rRNAs.

This is one of the proteins that bind and probably mediate the attachment of the 5S RNA into the large ribosomal subunit, where it forms part of the central protuberance. The protein is Large ribosomal subunit protein uL18 of Rhodopseudomonas palustris (strain HaA2).